Reading from the N-terminus, the 94-residue chain is Protein RESPONSE TO LOW SULFUR 2 (94 aa).

Residues 15 to 63 (VDELRRKNGEMEKAVEEMKKEMLQLWRRTQVAEEAEERLCSQLAELEAE) adopt a coiled-coil conformation.

In terms of biological role, may be involved in defense responses monitoring. Probably implicated into osmotic stress signaling. The sequence is that of Protein RESPONSE TO LOW SULFUR 2 from Arabidopsis thaliana (Mouse-ear cress).